The chain runs to 391 residues: D-gluconate/D-galactonate dehydratase (391 aa).

Glutamate 198 provides a ligand contact to Mg(2+). The Proton donor role is filled by histidine 200. Positions 224 and 250 each coordinate Mg(2+). Histidine 300 functions as the Proton acceptor in the catalytic mechanism.

The protein belongs to the mandelate racemase/muconate lactonizing enzyme family. GaD subfamily. As to quaternary structure, homooctamer. Mg(2+) is required as a cofactor.

The catalysed reaction is D-gluconate = 2-dehydro-3-deoxy-D-gluconate + H2O. It catalyses the reaction D-galactonate = 2-dehydro-3-deoxy-D-galactonate + H2O. It participates in carbohydrate acid metabolism; D-gluconate degradation. Involved in the degradation of glucose and galactose via the nonphosphorylative variant of Entner-Doudoroff pathway. Catalyzes the dehydration of gluconate to produce 2-keto-3-deoxygluconate (KDG). It is also able to catalyze the dehydration of galactonate to produce 2-keto-3-deoxygalactonate (KDGal). The chain is D-gluconate/D-galactonate dehydratase from Picrophilus torridus (strain ATCC 700027 / DSM 9790 / JCM 10055 / NBRC 100828 / KAW 2/3).